The following is a 201-amino-acid chain: Transgelin (201 aa).

Ala-2 is modified (N-acetylalanine). Positions 24–137 constitute a Calponin-homology (CH) domain; it reads EELEERLVEW…RTLMALGSLA (114 aa). Ser-166 carries the phosphoserine modification. Lys-172 bears the N6-acetyllysine mark. The Calponin-like repeat unit spans residues 175 to 200; that stretch reads IGLQMGSNRGASQAGMTGYGRPRQII. Ser-181 is subject to Phosphoserine. An Omega-N-methylarginine modification is found at Arg-183.

It belongs to the calponin family.

The protein localises to the cytoplasm. Actin cross-linking/gelling protein. In Mus musculus (Mouse), this protein is Transgelin (Tagln).